The chain runs to 477 residues: Probable F-box protein At5g25300 (477 aa).

Positions 346–377 (VDMNKEDSQIEINEKETKINQEHDQSDETQAK) form a coiled coil. Residues 412–458 (SPPWSELPGDILRSVFERLSFVDFQRAKQTCPIKRSKSNCLRLWLIT) enclose the F-box domain.

The protein is Probable F-box protein At5g25300 of Arabidopsis thaliana (Mouse-ear cress).